Here is a 458-residue protein sequence, read N- to C-terminus: tRNA modification GTPase MnmE (458 aa).

3 residues coordinate (6S)-5-formyl-5,6,7,8-tetrahydrofolate: R26, E88, and R127. Residues 224–378 enclose the TrmE-type G domain; the sequence is GLSTAIIGRP…IEDRINQLFF (155 aa). Residue N234 participates in K(+) binding. Residues 234–239, 253–259, and 278–281 contribute to the GTP site; these read NVGKSS, TDIAGTT, and DTAG. S238 contributes to the Mg(2+) binding site. T253, I255, and T258 together coordinate K(+). A Mg(2+)-binding site is contributed by T259. K458 is a binding site for (6S)-5-formyl-5,6,7,8-tetrahydrofolate.

Belongs to the TRAFAC class TrmE-Era-EngA-EngB-Septin-like GTPase superfamily. TrmE GTPase family. In terms of assembly, homodimer. Heterotetramer of two MnmE and two MnmG subunits. K(+) is required as a cofactor.

The protein localises to the cytoplasm. Its function is as follows. Exhibits a very high intrinsic GTPase hydrolysis rate. Involved in the addition of a carboxymethylaminomethyl (cmnm) group at the wobble position (U34) of certain tRNAs, forming tRNA-cmnm(5)s(2)U34. This is tRNA modification GTPase MnmE from Streptococcus pyogenes serotype M3 (strain ATCC BAA-595 / MGAS315).